We begin with the raw amino-acid sequence, 124 residues long: Large ribosomal subunit protein bL12 (124 aa).

It belongs to the bacterial ribosomal protein bL12 family. Homodimer. Part of the ribosomal stalk of the 50S ribosomal subunit. Forms a multimeric L10(L12)X complex, where L10 forms an elongated spine to which 2 to 4 L12 dimers bind in a sequential fashion. Binds GTP-bound translation factors.

Its function is as follows. Forms part of the ribosomal stalk which helps the ribosome interact with GTP-bound translation factors. Is thus essential for accurate translation. The polypeptide is Large ribosomal subunit protein bL12 (Rickettsia akari (strain Hartford)).